We begin with the raw amino-acid sequence, 208 residues long: Guanylate kinase (208 aa).

In terms of domain architecture, Guanylate kinase-like spans 4–185 (GNLYILSAPS…ALADLVHILR (182 aa)). 11 to 18 (APSGAGKS) serves as a coordination point for ATP.

It belongs to the guanylate kinase family.

The protein localises to the cytoplasm. It catalyses the reaction GMP + ATP = GDP + ADP. Essential for recycling GMP and indirectly, cGMP. This is Guanylate kinase from Mannheimia succiniciproducens (strain KCTC 0769BP / MBEL55E).